Consider the following 271-residue polypeptide: Cobalt import ATP-binding protein CbiO (271 aa).

One can recognise an ABC transporter domain in the interval 2 to 236; it reads LATSDLWFRY…TEAMEHAGLT (235 aa). Residue 34 to 41 participates in ATP binding; sequence GANGCGKS.

It belongs to the ABC transporter superfamily. Cobalt importer (TC 3.A.1.18.1) family. In terms of assembly, forms an energy-coupling factor (ECF) transporter complex composed of an ATP-binding protein (A component, CbiO), a transmembrane protein (T component, CbiQ) and 2 possible substrate-capture proteins (S components, CbiM and CbiN) of unknown stoichimetry. Expression of just CbiMN in E.coli confers some cobalt uptake.

The protein localises to the cell inner membrane. The protein operates within cofactor biosynthesis; adenosylcobalamin biosynthesis. Part of the energy-coupling factor (ECF) transporter complex CbiMNOQ involved in cobalt import. The complex confers cobalt uptake upon expression in E.coli; can also transport nickel with a very low affinity. Presumably responsible for energy coupling to the transport system. This is Cobalt import ATP-binding protein CbiO from Salmonella typhimurium (strain LT2 / SGSC1412 / ATCC 700720).